We begin with the raw amino-acid sequence, 632 residues long: Probable potassium transport system protein Kup 3 (632 aa).

12 helical membrane-spanning segments follow: residues 17–37, 60–80, 106–126, 144–164, 175–195, 210–230, 254–274, 292–312, 344–364, 370–390, 401–421, and 426–446; these read LFYLALGSVGVVYGDIGTSPL, LISLMIWALTIIVTIKYVLFL, TAILMLLGLMGAALFLGDAMI, PSLSDYIVPISVVILALLFVV, FFGPITAVWFLVMAAAGISHI, AVSFLLHEGFYGVVVLGAVFL, WFLLVFPALTLNYLGQGALVL, ALLPVVILATAATIIASQAVI, IFVPSVNAVLFIGVIFLVLSF, LATAYGISVTGAMVVTSIMAF, LPLAVVALAPLVVLELIFLGA, and IHDGGYIPILIATAFTVIMWT.

It belongs to the HAK/KUP transporter (TC 2.A.72) family.

It is found in the cell inner membrane. The enzyme catalyses K(+)(in) + H(+)(in) = K(+)(out) + H(+)(out). Its function is as follows. Transport of potassium into the cell. Likely operates as a K(+):H(+) symporter. This Rhizobium etli (strain ATCC 51251 / DSM 11541 / JCM 21823 / NBRC 15573 / CFN 42) protein is Probable potassium transport system protein Kup 3.